We begin with the raw amino-acid sequence, 214 residues long: RNA pyrophosphohydrolase (214 aa).

Residues 6–149 (GFRPNVGIIL…KRDVYQLALT (144 aa)) form the Nudix hydrolase domain. A Nudix box motif is present at residues 38–59 (GGIKYGETPMQAMYRELHEETG).

This sequence belongs to the Nudix hydrolase family. RppH subfamily. Requires a divalent metal cation as cofactor.

Functionally, accelerates the degradation of transcripts by removing pyrophosphate from the 5'-end of triphosphorylated RNA, leading to a more labile monophosphorylated state that can stimulate subsequent ribonuclease cleavage. The sequence is that of RNA pyrophosphohydrolase from Burkholderia cenocepacia (strain HI2424).